Here is a 123-residue protein sequence, read N- to C-terminus: UPF0102 protein DR_2282 (123 aa).

This sequence belongs to the UPF0102 family.

The polypeptide is UPF0102 protein DR_2282 (Deinococcus radiodurans (strain ATCC 13939 / DSM 20539 / JCM 16871 / CCUG 27074 / LMG 4051 / NBRC 15346 / NCIMB 9279 / VKM B-1422 / R1)).